The sequence spans 500 residues: L-arabinose isomerase (500 aa).

4 residues coordinate Mn(2+): Glu306, Glu333, His350, and His450.

The protein belongs to the arabinose isomerase family. Homohexamer. The cofactor is Mn(2+).

The catalysed reaction is beta-L-arabinopyranose = L-ribulose. It functions in the pathway carbohydrate degradation; L-arabinose degradation via L-ribulose; D-xylulose 5-phosphate from L-arabinose (bacterial route): step 1/3. In terms of biological role, catalyzes the conversion of L-arabinose to L-ribulose. This chain is L-arabinose isomerase, found in Salmonella newport (strain SL254).